Here is a 164-residue protein sequence, read N- to C-terminus: Phosphopantetheine adenylyltransferase (164 aa).

Substrate is bound at residue Ser-9. ATP contacts are provided by residues 9–10 (SF) and His-17. Lys-41, Leu-73, and Lys-87 together coordinate substrate. Residues 88 to 90 (GLR), Glu-98, and 123 to 129 (YSYLSSS) contribute to the ATP site.

It belongs to the bacterial CoaD family. Homohexamer. Mg(2+) serves as cofactor.

Its subcellular location is the cytoplasm. It catalyses the reaction (R)-4'-phosphopantetheine + ATP + H(+) = 3'-dephospho-CoA + diphosphate. Its pathway is cofactor biosynthesis; coenzyme A biosynthesis; CoA from (R)-pantothenate: step 4/5. Functionally, reversibly transfers an adenylyl group from ATP to 4'-phosphopantetheine, yielding dephospho-CoA (dPCoA) and pyrophosphate. This Clostridium botulinum (strain ATCC 19397 / Type A) protein is Phosphopantetheine adenylyltransferase.